We begin with the raw amino-acid sequence, 157 residues long: Parasitophorous vacuole membrane protein S16 (157 aa).

Positions Met1–Ser25 are cleaved as a signal peptide. The Extracellular segment spans residues Asp26–Leu105. The disordered stretch occupies residues Lys30–Ala74. A compositionally biased stretch (polar residues) spans Ser39 to Ala52. A helical transmembrane segment spans residues Ile106–Phe126. The Cytoplasmic segment spans residues Lys127–Ser157. The interval Lys130–Ser157 is disordered. Residues Lys132–Thr148 show a composition bias toward basic and acidic residues.

The protein localises to the parasitophorous vacuole membrane. The protein resides in the vacuole. Involved in male gametogenesis. Required for exflagellation of male gametocytes. May play a role in parasite transmission in the mosquito. Binds to the mosquito vector midgut. This chain is Parasitophorous vacuole membrane protein S16, found in Plasmodium falciparum (isolate 3D7).